The primary structure comprises 337 residues: Transaldolase (337 aa).

Positions Met-1–Arg-10 match the Nuclear localization signal motif. Lys-115 carries the post-translational modification N6-acetyllysine. Residue Lys-142 is the Schiff-base intermediate with substrate of the active site. Lys-219 is subject to N6-acetyllysine. Ser-237 and Ser-256 each carry phosphoserine. 3 positions are modified to N6-acetyllysine: Lys-269, Lys-286, and Lys-321.

It belongs to the transaldolase family. Type 1 subfamily. As to quaternary structure, homodimer. Interacts with KPNA1 and KPNA4.

It localises to the nucleus. Its subcellular location is the cytoplasm. The enzyme catalyses D-sedoheptulose 7-phosphate + D-glyceraldehyde 3-phosphate = D-erythrose 4-phosphate + beta-D-fructose 6-phosphate. It participates in carbohydrate degradation; pentose phosphate pathway; D-glyceraldehyde 3-phosphate and beta-D-fructose 6-phosphate from D-ribose 5-phosphate and D-xylulose 5-phosphate (non-oxidative stage): step 2/3. Catalyzes the rate-limiting step of the non-oxidative phase in the pentose phosphate pathway. Catalyzes the reversible conversion of sedheptulose-7-phosphate and D-glyceraldehyde 3-phosphate into erythrose-4-phosphate and beta-D-fructose 6-phosphate. The chain is Transaldolase (Taldo1) from Rattus norvegicus (Rat).